Consider the following 369-residue polypeptide: Glutamate 5-kinase (369 aa).

Lys14 lines the ATP pocket. Substrate-binding residues include Ser54, Asp141, and Asn153. Residues 173-174 (SD) and 215-221 (TGGMVTK) contribute to the ATP site. Residues 277–355 (RGRLHLDPGA…SELATALGPA (79 aa)) form the PUA domain.

It belongs to the glutamate 5-kinase family.

Its subcellular location is the cytoplasm. The catalysed reaction is L-glutamate + ATP = L-glutamyl 5-phosphate + ADP. Its pathway is amino-acid biosynthesis; L-proline biosynthesis; L-glutamate 5-semialdehyde from L-glutamate: step 1/2. Its function is as follows. Catalyzes the transfer of a phosphate group to glutamate to form L-glutamate 5-phosphate. The protein is Glutamate 5-kinase of Salinispora arenicola (strain CNS-205).